We begin with the raw amino-acid sequence, 100 residues long: Integration host factor subunit alpha (100 aa).

The protein belongs to the bacterial histone-like protein family. Heterodimer of an alpha and a beta chain.

This protein is one of the two subunits of integration host factor, a specific DNA-binding protein that functions in genetic recombination as well as in transcriptional and translational control. This is Integration host factor subunit alpha from Phenylobacterium zucineum (strain HLK1).